The chain runs to 211 residues: Superoxide dismutase [Cu-Zn], chloroplastic (211 aa).

A chloroplast-targeting transit peptide spans M1 to D57. Cu cation contacts are provided by H103, H105, and H120. C114 and C203 are joined by a disulfide. The Zn(2+) site is built by H120, H128, H137, and D140. H177 lines the Cu cation pocket.

It belongs to the Cu-Zn superoxide dismutase family. As to quaternary structure, homotetramer. It depends on Cu cation as a cofactor. Zn(2+) serves as cofactor.

It localises to the plastid. It is found in the chloroplast. It catalyses the reaction 2 superoxide + 2 H(+) = H2O2 + O2. Its function is as follows. Destroys radicals which are normally produced within the cells and which are toxic to biological systems. This is Superoxide dismutase [Cu-Zn], chloroplastic (SODCP) from Oryza sativa subsp. japonica (Rice).